The sequence spans 347 residues: E3 ubiquitin-protein ligase RNF146-B (347 aa).

An RING-type zinc finger spans residues 37-75 (CAICLQTCVHPVSLPCKHVFCYLCVKGASWLGKRCALCR). Glycyl lysine isopeptide (Lys-Gly) (interchain with G-Cter in ubiquitin) cross-links involve residues K85, K95, K131, and K176. The WWE domain maps to 92–168 (EELKAASRGN…EHGRRRKIKR (77 aa)). Disordered regions lie at residues 196 to 241 (SSAD…GTSL) and 257 to 347 (ERSH…VTEV). Residues 203–217 (SVPAQSGASVQSSSV) show a composition bias toward low complexity. Residues 282–296 (SIEETESDASSDSED) are compositionally biased toward acidic residues. Phosphoserine is present on residues S288 and S292. A compositionally biased stretch (polar residues) spans 304–322 (HSLTQQRLLVPNPSQTVSD).

In terms of assembly, interacts with poly-ADP-ribosylated AXIN1, AXIN2, BLZF1 and CASC3. Ubiquitinated; autoubiquitinated. Autoubiquitination is enhanced upon poly(ADP-ribose)-binding.

It is found in the cytoplasm. The protein localises to the cytosol. It catalyses the reaction S-ubiquitinyl-[E2 ubiquitin-conjugating enzyme]-L-cysteine + [acceptor protein]-L-lysine = [E2 ubiquitin-conjugating enzyme]-L-cysteine + N(6)-ubiquitinyl-[acceptor protein]-L-lysine.. Its pathway is protein modification; protein ubiquitination. In terms of biological role, E3 ubiquitin-protein ligase that specifically binds poly-ADP-ribosylated proteins and mediates their ubiquitination and subsequent degradation. Acts as an activator of the Wnt signaling pathway by mediating the ubiquitination of poly-ADP-ribosylated AXIN1 and AXIN2, 2 key components of the beta-catenin destruction complex. Acts in cooperation with tankyrase proteins (TNKS and TNKS2), which mediate poly-ADP-ribosylation of target proteins AXIN1, AXIN2, BLZF1, CASC3, TNKS and TNKS2. Recognizes and binds tankyrase-dependent poly-ADP-ribosylated proteins via its WWE domain and mediates their ubiquitination. The sequence is that of E3 ubiquitin-protein ligase RNF146-B (RNF146B) from Bos taurus (Bovine).